The sequence spans 1960 residues: Myosin-9 (1960 aa).

N-acetylalanine is present on alanine 2. The segment at 2–838 (AQQAADKYLY…RLFTKVKPLL (837 aa)) is mediates interaction with LIMCH1. An N6-acetyllysine modification is found at lysine 8. Tyrosine 11 carries the post-translational modification Phosphotyrosine. In terms of domain architecture, Myosin N-terminal SH3-like spans 27-77 (AAKKLVWVPSSKNGFEPASLKEEVGEEAIVELVENGKKVKVNKDDIQKMNP). A Myosin motor domain is found at 81 to 776 (SKVEDMAELT…VLAHLEEERD (696 aa)). Lysine 102 is modified (N6-acetyllysine). ATP is bound at residue 174 to 181 (GESGAGKT). N6-acetyllysine is present on residues lysine 299, lysine 435, and lysine 613. Serine 628 bears the Phosphoserine mark. The interval 654–676 (LAKLMATLRNTNPNFVRCIIPNH) is actin-binding. Phosphotyrosine is present on tyrosine 754. Residues 779 to 808 (ITDVIIGFQACCRGYLARKAFAKRQQQLTA) form the IQ domain. Positions 841-1926 (IRHEDELLAK…LKNKLRRGDL (1086 aa)) form a coiled coil. An N6-succinyllysine modification is found at lysine 850. An N6-acetyllysine mark is found at lysine 860, lysine 975, and lysine 1024. The span at 1035–1055 (RLRREEKQRQELEKTRRKLEG) shows a compositional bias: basic and acidic residues. The disordered stretch occupies residues 1035 to 1057 (RLRREEKQRQELEKTRRKLEGDS). Position 1114 is a phosphoserine (serine 1114). The interval 1117–1167 (QEDLESERASRNKAEKQKRDLGEELEALKTELEDTLDSTAAQQELRSKREQ) is disordered. The span at 1122 to 1148 (SERASRNKAEKQKRDLGEELEALKTEL) shows a compositional bias: basic and acidic residues. An N6-acetyllysine mark is found at lysine 1234 and lysine 1249. Residues 1327–1352 (LSTKLKQMEDEKNSFREQLEEEEEAK) form a disordered region. Positions 1332-1352 (KQMEDEKNSFREQLEEEEEAK) are enriched in basic and acidic residues. Residues lysine 1357, lysine 1392, lysine 1404, lysine 1410, lysine 1459, and lysine 1638 each carry the N6-acetyllysine modification. Lysine 1669 bears the N6-succinyllysine mark. A Phosphoserine modification is found at serine 1714. The disordered stretch occupies residues 1768-1788 (LERSHAQKNENARQQLERQNK). N6-acetyllysine is present on residues lysine 1793, lysine 1802, and lysine 1845. A disordered region spans residues 1877–1908 (RQLEEAEEEAQRANASRRKLQRELEDATETAD). Arginine 1923 carries the post-translational modification Omega-N-methylarginine. Threonine 1939 carries the post-translational modification Phosphothreonine. Residues 1939–1960 (TGDCSDEEVDGKADGADAKAAE) are disordered. A Phosphoserine modification is found at serine 1943. Residues 1948–1960 (DGKADGADAKAAE) show a composition bias toward basic and acidic residues.

The protein belongs to the TRAFAC class myosin-kinesin ATPase superfamily. Myosin family. In terms of assembly, myosin is a hexameric protein that consists of 2 heavy chain subunits (MHC), 2 alkali light chain subunits (MLC) and 2 regulatory light chain subunits (MLC-2). Interacts with RASIP1. Interacts with DDR1. Interacts with PDLIM2. Interacts with SVIL. Interacts with HTRA3. Interacts with Myo7a. Interacts with CFAP95. Interacts with LIMCH1; independently of the integration of MYH9 into the myosin complex. Interacts with RAB3A. Interacts with ZBED4. Interacts with S100A4; this interaction increases cell motility. In terms of processing, ISGylated. Post-translationally, ubiquitination.

The protein resides in the cytoplasm. It localises to the cytoskeleton. Its subcellular location is the cell cortex. The protein localises to the cytoplasmic vesicle. It is found in the secretory vesicle. The protein resides in the cortical granule. Cellular myosin that appears to play a role in cytokinesis, cell shape, and specialized functions such as secretion and capping. Required for cortical actin clearance prior to oocyte exocytosis. Promotes cell motility in conjunction with S100A4. During cell spreading, plays an important role in cytoskeleton reorganization, focal contact formation (in the margins but not the central part of spreading cells), and lamellipodial retraction; this function is mechanically antagonized by MYH10. This chain is Myosin-9 (Myh9), found in Mus musculus (Mouse).